The following is a 133-amino-acid chain: MSWQTYVDDHLMCEIEGTNNHLTAAAILGVDGSVWAQSANFPQFKPDEISAVVKEFDEAGTLAPTGLHLGGTKYMVIQGEAGQVIRGKKGPGGICVKKTGQALIFGIYDEPVTPGQCNMIVERLGDYLVEQGM.

Cysteines 95 and 117 form a disulfide.

It belongs to the profilin family. In terms of assembly, occurs in many kinds of cells as a complex with monomeric actin in a 1:1 ratio. As to expression, expressed in pollen.

The protein localises to the cytoplasm. Its subcellular location is the cytoskeleton. Its function is as follows. Binds to actin and affects the structure of the cytoskeleton. At high concentrations, profilin prevents the polymerization of actin, whereas it enhances it at low concentrations. This Kali turgidum (Prickly saltwort) protein is Profilin Sal k 4.0101.